The sequence spans 689 residues: Glycine--tRNA ligase beta subunit (689 aa).

It belongs to the class-II aminoacyl-tRNA synthetase family. As to quaternary structure, tetramer of two alpha and two beta subunits.

The protein resides in the cytoplasm. The enzyme catalyses tRNA(Gly) + glycine + ATP = glycyl-tRNA(Gly) + AMP + diphosphate. This is Glycine--tRNA ligase beta subunit from Shewanella sp. (strain W3-18-1).